We begin with the raw amino-acid sequence, 96 residues long: MRVMVDQDLCGTSGQCVLTLPGTFRQREPDGVAEVCVATVPHALHAAVRLAASQCPVAAIRVIESDAGDGERASADPAPSPAEAERHAAKDQHNLG.

3 residues coordinate [3Fe-4S] cluster: C10, C16, and C55. Residues 67 to 96 form a disordered region; the sequence is AGDGERASADPAPSPAEAERHAAKDQHNLG. Residues 83–96 show a composition bias toward basic and acidic residues; sequence EAERHAAKDQHNLG.

It depends on [3Fe-4S] cluster as a cofactor.

In terms of biological role, electron transport protein for the cytochrome systems. This is an uncharacterized protein from Bradyrhizobium diazoefficiens (strain JCM 10833 / BCRC 13528 / IAM 13628 / NBRC 14792 / USDA 110).